A 975-amino-acid chain; its full sequence is Kinesin heavy chain (975 aa).

Residues 12-333 form the Kinesin motor domain; the sequence is SIKVVCRFRP…LDFGRRAKTV (322 aa). 92–99 contributes to the ATP binding site; it reads GQTSSGKT. The segment at 180 to 321 is microtubule-binding; sequence VSSPEDVFEV…PASFNESETK (142 aa). A coiled-coil region spans residues 335–931; the sequence is NVVCVNEELT…DRIKEAVRQK (597 aa). The interval 810–891 is necessary for associating with milt; it reads VAKELQTLHN…LPKLEKRLRC (82 aa). Residues 932 to 975 form a globular region; it reads HLGRRGPQAQIAKPIRSGQGAIAIRGGGAVGGPSPLAQVNPVNS.

It belongs to the TRAFAC class myosin-kinesin ATPase superfamily. Kinesin family. Kinesin subfamily. As to quaternary structure, oligomer composed of two heavy chains and two light chains.

The protein resides in the cytoplasm. The protein localises to the cytoskeleton. Its function is as follows. Kinesin is a microtubule-associated force-producing protein that may play a role in organelle transport. Milt and Miro form an essential protein complex that links Khc to mitochondria for light chain-independent, anterograde transport of mitochondria. This chain is Kinesin heavy chain (Khc), found in Drosophila melanogaster (Fruit fly).